A 101-amino-acid polypeptide reads, in one-letter code: Small ribosomal subunit protein uS14 (101 aa).

It belongs to the universal ribosomal protein uS14 family. In terms of assembly, part of the 30S ribosomal subunit. Contacts proteins S3 and S10.

Binds 16S rRNA, required for the assembly of 30S particles and may also be responsible for determining the conformation of the 16S rRNA at the A site. The polypeptide is Small ribosomal subunit protein uS14 (Haemophilus ducreyi (strain 35000HP / ATCC 700724)).